The sequence spans 239 residues: ATP-dependent dethiobiotin synthetase BioD (239 aa).

Residue 15 to 20 (EIGKTF) coordinates ATP. Mg(2+) is bound at residue Thr19. The active site involves Lys40. Residues Asp57, 118–121 (EGVG), 178–179 (NH), and 211–213 (AHL) contribute to the ATP site. Residues Asp57 and Glu118 each contribute to the Mg(2+) site.

The protein belongs to the dethiobiotin synthetase family. In terms of assembly, homodimer. It depends on Mg(2+) as a cofactor.

It localises to the cytoplasm. The enzyme catalyses (7R,8S)-7,8-diammoniononanoate + CO2 + ATP = (4R,5S)-dethiobiotin + ADP + phosphate + 3 H(+). The protein operates within cofactor biosynthesis; biotin biosynthesis; biotin from 7,8-diaminononanoate: step 1/2. Its function is as follows. Catalyzes a mechanistically unusual reaction, the ATP-dependent insertion of CO2 between the N7 and N8 nitrogen atoms of 7,8-diaminopelargonic acid (DAPA, also called 7,8-diammoniononanoate) to form a ureido ring. This Burkholderia ambifaria (strain MC40-6) protein is ATP-dependent dethiobiotin synthetase BioD.